Consider the following 880-residue polypeptide: Interference hedgehog (880 aa).

A signal peptide spans 1–20 (MTLLTSSLLFFSLLTSRLEA). Residues 21-703 (IPVLEKSPAH…ETFNMSPMLT (683 aa)) lie on the Extracellular side of the membrane. Ig-like C2-type domains lie at 45-142 (PGVR…IARL), 132-234 (PLVV…IQLT), 252-340 (PHLL…YIKV), and 346-432 (PQIV…LQVN). Cystine bridges form between Cys-68-Cys-126, Cys-173-Cys-220, Cys-276-Cys-324, and Cys-367-Cys-414. 2 N-linked (GlcNAc...) asparagine glycosylation sites follow: Asn-102 and Asn-209. Residues 426–467 (GTLLQVNPKQIQEPRESGGTHRPKPNQGSKQKQMYPPTPPNV) are disordered. 2 consecutive Fibronectin type-III domains span residues 461–567 (PPTP…LQPG) and 575–670 (VPEL…TQRP). A glycan (N-linked (GlcNAc...) asparagine) is linked at Asn-466. The heparin site is built by Arg-497, Lys-501, Lys-503, and Arg-541. A glycan (N-linked (GlcNAc...) asparagine) is linked at Asn-557. The tract at residues 662–697 (LKQGRTQRPKTSTTEEPTLQMGDRDTTTPSHNETFN) is disordered. 2 stretches are compositionally biased toward polar residues: residues 665-678 (GRTQRPKTSTTEEP) and 688-697 (TTPSHNETFN). An N-linked (GlcNAc...) asparagine glycan is attached at Asn-693. A helical membrane pass occupies residues 704–724 (GTIGGGAVLILLLISTCLCVC). Over 725–880 (RRRSSRSRGN…SSGSLNSVGV (156 aa)) the chain is Cytoplasmic. Disordered regions lie at residues 728–762 (SSRSRGNNPNKPRMAELRDDFVPLGNCSPTKQRQR) and 775–880 (QQQQ…SVGV). 2 stretches are compositionally biased toward low complexity: residues 823 to 837 (RAGGSNGSNNGNNNN) and 864 to 880 (SSRSENLSSGSLNSVGV).

The protein belongs to the immunoglobulin superfamily. IHOG family. In terms of assembly, homodimer. Heterotetramer; 2 iHog chains bind 2 hh chains when facilitated by heparin, heparin is required to promote high-affinity interactions between hh and iHog.

Its subcellular location is the membrane. Its function is as follows. Mediates response to the active Hedgehog (Hh) protein signal in embryos, functioning upstream or at the level of patched (ptc). In Drosophila yakuba (Fruit fly), this protein is Interference hedgehog.